Consider the following 66-residue polypeptide: Large ribosomal subunit protein uL29 (66 aa).

It belongs to the universal ribosomal protein uL29 family.

The protein is Large ribosomal subunit protein uL29 of Helicobacter pylori (strain P12).